A 226-amino-acid chain; its full sequence is Ribonuclease 3 (226 aa).

In terms of domain architecture, RNase III spans 6–128 (TKKIQKVLGY…LIGSIYLDSN (123 aa)). Residue Glu-41 participates in Mg(2+) binding. Asp-45 is an active-site residue. Residues Asn-114 and Glu-117 each coordinate Mg(2+). Glu-117 is an active-site residue. Positions 155–225 (DPKTRLQEYL…AQKALIKLGV (71 aa)) constitute a DRBM domain.

Belongs to the ribonuclease III family. Homodimer. Mg(2+) is required as a cofactor.

It is found in the cytoplasm. The enzyme catalyses Endonucleolytic cleavage to 5'-phosphomonoester.. Functionally, digests double-stranded RNA. Involved in the processing of primary rRNA transcript to yield the immediate precursors to the large and small rRNAs (23S and 16S). Processes some mRNAs, and tRNAs when they are encoded in the rRNA operon. Processes pre-crRNA and tracrRNA of type II CRISPR loci if present in the organism. This Buchnera aphidicola subsp. Acyrthosiphon pisum (strain 5A) protein is Ribonuclease 3.